Reading from the N-terminus, the 191-residue chain is dCTP deaminase (191 aa).

DCTP contacts are provided by residues 112 to 117, 136 to 138, glutamine 157, tyrosine 173, and glutamine 183; these read KSTYAR and TLE. Glutamate 138 serves as the catalytic Proton donor/acceptor.

It belongs to the dCTP deaminase family. Homotrimer.

It carries out the reaction dCTP + H2O + H(+) = dUTP + NH4(+). It participates in pyrimidine metabolism; dUMP biosynthesis; dUMP from dCTP (dUTP route): step 1/2. Catalyzes the deamination of dCTP to dUTP. This is dCTP deaminase from Xylella fastidiosa (strain 9a5c).